The chain runs to 148 residues: Cytochrome c-type biogenesis protein CcmE (148 aa).

Residues 1–7 (MKPRNRR) lie on the Cytoplasmic side of the membrane. Residues 8 to 28 (IALIVAGLSALGIATALVLNA) form a helical; Signal-anchor for type II membrane protein membrane-spanning segment. The Periplasmic segment spans residues 29–148 (FQSNLVFFFT…VQKKPASRKP (120 aa)). Residues H123 and Y127 each contribute to the heme site. The segment at 128-148 (MPPEAQHALDEVQKKPASRKP) is disordered.

The protein belongs to the CcmE/CycJ family.

It is found in the cell inner membrane. Its function is as follows. Heme chaperone required for the biogenesis of c-type cytochromes. Transiently binds heme delivered by CcmC and transfers the heme to apo-cytochromes in a process facilitated by CcmF and CcmH. The sequence is that of Cytochrome c-type biogenesis protein CcmE from Pseudomonas aeruginosa.